A 292-amino-acid polypeptide reads, in one-letter code: 5,10-methylenetetrahydrofolate reductase (292 aa).

E26 functions as the Proton donor/acceptor in the catalytic mechanism. Position 57 (T57) interacts with NADH. Residues Y58, A60, H86, R116, G117, D118, A130, Y150, H154, A157, D163, N166, R169, and K170 each coordinate FAD. A (6S)-5-methyl-5,6,7,8-tetrahydrofolate-binding site is contributed by D118. Residue Q181 coordinates NADH. 3 residues coordinate (6S)-5-methyl-5,6,7,8-tetrahydrofolate: Q181, Q217, and R277.

This sequence belongs to the methylenetetrahydrofolate reductase family. The cofactor is FAD.

It catalyses the reaction (6S)-5-methyl-5,6,7,8-tetrahydrofolate + NAD(+) = (6R)-5,10-methylene-5,6,7,8-tetrahydrofolate + NADH + H(+). Its pathway is one-carbon metabolism; tetrahydrofolate interconversion. It functions in the pathway amino-acid biosynthesis; L-methionine biosynthesis via de novo pathway. Its function is as follows. Catalyzes the NADH-dependent reduction of 5,10-methylenetetrahydrofolate to 5-methyltetrahydrofolate. Is required to provide the methyl group necessary for methionine synthetase to convert homocysteine to methionine; the methyl group is given by 5-methyltetrahydrofolate. In Neisseria meningitidis serogroup B (strain ATCC BAA-335 / MC58), this protein is 5,10-methylenetetrahydrofolate reductase (metF).